The chain runs to 3412 residues: Genome polyprotein (3412 aa).

The Cytoplasmic segment spans residues 1–104 (MSGRKAQGKT…LSSRKRRSNE (104 aa)). Positions 38–72 (PGPSRGVQGFIFFFLFNILTGKKLTTHLKRLWRML) are hydrophobic; homodimerization of capsid protein C. Residues 102-121 (SNEMAMMPLLILSMVILAGG) constitute a propeptide, ER anchor for the capsid protein C, removed in mature form by serine protease NS3. The helical transmembrane segment at 105–125 (MAMMPLLILSMVILAGGVTLV) threads the bilayer. The Extracellular segment spans residues 126–244 (RKNRWLLLNV…GERQLQKIER (119 aa)). N-linked (GlcNAc...) asparagine; by host glycosylation is found at Asn134 and Asn150. The chain crosses the membrane as a helical span at residues 245-265 (WLVRNPFFAITALAIAYLVGN). Residues 266 to 270 (NMTQR) are Cytoplasmic-facing. A helical membrane pass occupies residues 271-285 (VVIALLVLAVGPAYS). Residues 286–730 (AHCIGITDRD…TVFGSAFQGL (445 aa)) are Extracellular-facing. 8 cysteine pairs are disulfide-bonded: Cys288/Cys315, Cys345/Cys401, Cys345/Cys406, Cys359/Cys390, Cys377/Cys401, Cys377/Cys406, Cys467/Cys568, and Cys585/Cys615. The tract at residues 383–396 (DRGWGNGCGLFGKG) is fusion peptide. A helical transmembrane segment spans residues 731-751 (FGGLSWITKVIMGAVLIWVGI). Residues 752–757 (NTRNMT) lie on the Extracellular side of the membrane. Residues 758-778 (MSMSMILVGVIMMFLSLGVGA) traverse the membrane as a helical segment. Topologically, residues 779 to 1132 (DQGCAVNFGK…LVRSWVTAGE (354 aa)) are extracellular. 6 disulfides stabilise this stretch: Cys782–Cys793, Cys833–Cys921, Cys957–Cys1002, Cys1058–Cys1107, Cys1069–Cys1091, and Cys1090–Cys1094. Residues Asn908 and Asn986 are each glycosylated (N-linked (GlcNAc...) asparagine; by host). Residues 1133 to 1153 (VHAVPFGLVSMMIAMEVVLRK) form a helical membrane-spanning segment. The Cytoplasmic portion of the chain corresponds to 1154–1201 (RQGPKQMLVGGIILLGAMLVGQVTVLDLVKLIVAVGLHFHEINNGGDA). The helical transmembrane segment at 1202 to 1222 (MYMALIASFSIRPGLLVGFGL) threads the bilayer. Residues 1223–1287 (RTLWSPRERL…VLPLMALLTP (65 aa)) are Lumenal-facing. The helical transmembrane segment at 1288–1308 (VTMHEVRMATMLFCTVVIVGV) threads the bilayer. Residues 1309 to 1355 (LHQNAKDTSMQKTIPIVALTLTSYMGLTQPFLGLCAYMSTQVFGRRS) are Cytoplasmic-facing. The helical transmembrane segment at 1356–1376 (IPVNEALAAAGLVGVLAGLAF) threads the bilayer. Topologically, residues 1377–1378 (QD) are lumenal. Residues 1379–1399 (MENFLGPIAVGGILMMLVSVA) traverse the membrane as a helical segment. The Cytoplasmic segment spans residues 1400–1456 (GKVDGLELKKLGEVSWEEEAEISGSSSRYDVALSEQGEFKLLSEDKVPWDQIVMTSL). The interval 1407 to 1446 (LKKLGEVSWEEEAEISGSSSRYDVALSEQGEFKLLSEDKV) is interacts with and activates NS3 protease. An intramembrane region (helical) is located at residues 1457 to 1477 (ALVGAAIHPFALLLVLGGWVL). The Cytoplasmic segment spans residues 1478-2157 (HIKGARRSGD…RNALSMMPEA (680 aa)). The region spanning 1485 to 1665 (SGDVLWDIPT…EVKEESKEEL (181 aa)) is the Peptidase S7 domain. Catalysis depends on charge relay system; for serine protease NS3 activity residues His1537, Asp1561, and Ser1622. The 157-residue stretch at 1669-1825 (PTMLKKGMTT…HSNGEIEDVQ (157 aa)) folds into the Helicase ATP-binding domain. The interval 1673 to 1676 (KKGM) is important for RNA-binding. 1682–1689 (FHPGAGKT) serves as a coordination point for ATP. The DEAH box signature appears at 1773–1776 (DEAH). Residues 1820–1997 (EIEDVQTDIP…VRGGMVAPLY (178 aa)) enclose the Helicase C-terminal domain. N6-acetyllysine; by host is present on Lys1877. The disordered stretch occupies residues 1942–1961 (AAQRRGRIGRNPNRDGDSYY). The helical transmembrane segment at 2158–2178 (MTIVMLFILAGLLTSGMVIFF) threads the bilayer. The Lumenal segment spans residues 2179 to 2186 (MSPKGMSR). The segment at residues 2187–2207 (MSMAMGTMAGSGYLMFLGGVK) is an intramembrane region (helical). Over 2208–2209 (PT) the chain is Lumenal. Residues 2210 to 2230 (HISYVMLIFFVLMVVIIPEPG) form a helical membrane-spanning segment. Topologically, residues 2231–2241 (QQRTIQDNQVA) are cytoplasmic. A helical membrane pass occupies residues 2242–2262 (YLIIGILTLLSIVAANELGML). The Lumenal segment spans residues 2263 to 2293 (EKTKEDFFGRRNIATSGGTIPWSWPDLDLKP). An intramembrane region (helical) is located at residues 2294-2314 (GAAWTVYVGIVTMLSPMLHHW). Residues 2315–2360 (IKVEYGNLSLSGIAQSASVLSFMDKGIPFMKMNISVVILLVSGWNS) lie on the Lumenal side of the membrane. A helical membrane pass occupies residues 2361–2380 (ITVIPLLCGVGGAMLHWTLI). Residues 2381 to 2421 (LPGIKAQQSKLAQKRVFHGVAKNPVVDGNPTADIEEAPEMP) are Cytoplasmic-facing. Residues 2422 to 2442 (ALYEKKLALYLLLALSLMSVA) form a helical membrane-spanning segment. The Lumenal portion of the chain corresponds to 2443-2445 (MCR). The helical transmembrane segment at 2446-2466 (TPFSLAEGIVLSSAALGPLIE) threads the bilayer. The Cytoplasmic segment spans residues 2467 to 3411 (GNTSLLWNGP…VDADLQPGEL (945 aa)). An mRNA cap 0-1 NS5-type MT domain is found at 2508-2772 (GSASGKTLGE…DVILPIGTRS (265 aa)). Residue Ser2563 participates in S-adenosyl-L-methionine binding. Phosphoserine is present on Ser2563. Lys2568 functions as the For 2'-O-MTase activity in the catalytic mechanism. 6 residues coordinate S-adenosyl-L-methionine: Gly2593, Trp2594, Thr2611, Leu2612, Asp2638, and Ile2639. Asp2653 serves as the catalytic For 2'-O-MTase activity. Ile2654 is a binding site for S-adenosyl-L-methionine. Active-site for 2'-O-MTase activity residues include Lys2689 and Glu2725. An S-adenosyl-L-methionine-binding site is contributed by Tyr2727. The Nuclear localization signal motif lies at 2879-2912 (RKIMKVVNRWLFRHLAREKNPRLCTKEEFIAKVR). Glu2946, His2950, Cys2955, and Cys2958 together coordinate Zn(2+). A RdRp catalytic domain is found at 3036-3188 (GGFYADDTAG…RPVDDRFGLA (153 aa)). Zn(2+)-binding residues include His3223, Cys3239, and Cys3358.

The protein in the N-terminal section; belongs to the class I-like SAM-binding methyltransferase superfamily. mRNA cap 0-1 NS5-type methyltransferase family. In terms of assembly, homodimer. Interacts (via N-terminus) with host EXOC1 (via C-terminus); this interaction results in EXOC1 degradation through the proteasome degradation pathway. As to quaternary structure, forms heterodimers with envelope protein E in the endoplasmic reticulum and Golgi. Homodimer; in the endoplasmic reticulum and Golgi. Interacts with protein prM. Interacts with non-structural protein 1. In terms of assembly, homodimer; Homohexamer when secreted. Interacts with envelope protein E. As to quaternary structure, interacts (via N-terminus) with serine protease NS3. Forms a heterodimer with serine protease NS3. May form homooligomers. In terms of assembly, forms a heterodimer with NS2B. Interacts with non-structural protein 2A (via N-terminus). Interacts with NS4B. Interacts with unphosphorylated RNA-directed RNA polymerase NS5; this interaction stimulates RNA-directed RNA polymerase NS5 guanylyltransferase activity. NS3 interacts with host PDCD6IP; this interaction contributes to virion release. As to quaternary structure, interacts with serine protease NS3. Homodimer. Interacts with host STAT2; this interaction prevents the establishment of cellular antiviral state. Interacts with serine protease NS3. Interacts with host TRIM23; this interaction leads to NS5 ubiquitination. Post-translationally, specific enzymatic cleavages in vivo yield mature proteins. The nascent capsid protein C contains a C-terminal hydrophobic domain that act as a signal sequence for translocation of prM into the lumen of the ER. Mature capsid protein C is cleaved at a site upstream of this hydrophobic domain by NS3. prM is cleaved in post-Golgi vesicles by a host furin, releasing the mature small envelope protein M, and peptide pr. Non-structural protein 2A-alpha, a C-terminally truncated form of non-structural protein 2A, results from partial cleavage by NS3. Specific enzymatic cleavages in vivo yield mature proteins peptide 2K acts as a signal sequence and is removed from the N-terminus of NS4B by the host signal peptidase in the ER lumen. Signal cleavage at the 2K-4B site requires a prior NS3 protease-mediated cleavage at the 4A-2K site. In terms of processing, cleaved in post-Golgi vesicles by a host furin, releasing the mature small envelope protein M, and peptide pr. This cleavage is incomplete as up to 30% of viral particles still carry uncleaved prM. N-glycosylated. Post-translationally, N-glycosylated. The excreted form is glycosylated and this is required for efficient secretion of the protein from infected cells. In terms of processing, polyubiquitinated; ubiquitination is probably mediated by host TRIM23 and is prerequisite for NS5-STAT2 interaction. NS5 is not ISGylated or sumoylated. Acetylated by host KAT5. Acetylation modulates NS3 RNA-binding and unwinding activities and plays an important positive role for viral replication. Post-translationally, phosphorylated on serines residues. This phosphorylation may trigger NS5 nuclear localization.

Its subcellular location is the virion. It localises to the host nucleus. It is found in the host cytoplasm. The protein localises to the host perinuclear region. The protein resides in the secreted. Its subcellular location is the virion membrane. It localises to the host endoplasmic reticulum membrane. The enzyme catalyses Selective hydrolysis of -Xaa-Xaa-|-Yaa- bonds in which each of the Xaa can be either Arg or Lys and Yaa can be either Ser or Ala.. It catalyses the reaction RNA(n) + a ribonucleoside 5'-triphosphate = RNA(n+1) + diphosphate. It carries out the reaction a ribonucleoside 5'-triphosphate + H2O = a ribonucleoside 5'-diphosphate + phosphate + H(+). The catalysed reaction is ATP + H2O = ADP + phosphate + H(+). The enzyme catalyses a 5'-end (5'-triphosphoguanosine)-ribonucleoside in mRNA + S-adenosyl-L-methionine = a 5'-end (N(7)-methyl 5'-triphosphoguanosine)-ribonucleoside in mRNA + S-adenosyl-L-homocysteine. It catalyses the reaction a 5'-end (N(7)-methyl 5'-triphosphoguanosine)-ribonucleoside in mRNA + S-adenosyl-L-methionine = a 5'-end (N(7)-methyl 5'-triphosphoguanosine)-(2'-O-methyl-ribonucleoside) in mRNA + S-adenosyl-L-homocysteine + H(+). Functionally, plays a role in virus budding by binding to the cell membrane and gathering the viral RNA into a nucleocapsid that forms the core of a mature virus particle. During virus entry, may induce genome penetration into the host cytoplasm after hemifusion induced by the surface proteins. Can migrate to the cell nucleus where it modulates host functions. Inhibits RNA silencing by interfering with host Dicer. Its function is as follows. Prevents premature fusion activity of envelope proteins in trans-Golgi by binding to envelope protein E at pH6.0. After virion release in extracellular space, gets dissociated from E dimers. In terms of biological role, acts as a chaperone for envelope protein E during intracellular virion assembly by masking and inactivating envelope protein E fusion peptide. prM is the only viral peptide matured by host furin in the trans-Golgi network probably to avoid catastrophic activation of the viral fusion activity in acidic Golgi compartment prior to virion release. prM-E cleavage is inefficient, and many virions are only partially matured. These uncleaved prM would play a role in immune evasion. Functionally, may play a role in virus budding. Exerts cytotoxic effects by activating a mitochondrial apoptotic pathway through M ectodomain. May display a viroporin activity. Binds to host cell surface receptor and mediates fusion between viral and cellular membranes. Envelope protein is synthesized in the endoplasmic reticulum in the form of heterodimer with protein prM. They play a role in virion budding in the ER, and the newly formed immature particle is covered with 60 spikes composed of heterodimer between precursor prM and envelope protein E. The virion is transported to the Golgi apparatus where the low pH causes dissociation of PrM-E heterodimers and formation of E homodimers. prM-E cleavage is inefficient, and many virions are only partially matured. These uncleaved prM would play a role in immune evasion. Its function is as follows. Involved in immune evasion, pathogenesis and viral replication. Once cleaved off the polyprotein, is targeted to three destinations: the viral replication cycle, the plasma membrane and the extracellular compartment. Essential for viral replication. Required for formation of the replication complex and recruitment of other non-structural proteins to the ER-derived membrane structures. Excreted as a hexameric lipoparticle that plays a role against host immune response. Antagonizing the complement function. Binds to the host macrophages and dendritic cells. Inhibits signal transduction originating from Toll-like receptor 3 (TLR3). In terms of biological role, component of the viral RNA replication complex that functions in virion assembly and antagonizes the host immune response. Functionally, required cofactor for the serine protease function of NS3. May have membrane-destabilizing activity and form viroporins. Displays three enzymatic activities: serine protease, NTPase and RNA helicase. NS3 serine protease, in association with NS2B, performs its autocleavage and cleaves the polyprotein at dibasic sites in the cytoplasm: C-prM, NS2A-NS2B, NS2B-NS3, NS3-NS4A, NS4A-2K and NS4B-NS5. NS3 RNA helicase binds RNA and unwinds dsRNA in the 3' to 5' direction. Also plays a role in virus assembly. Its function is as follows. Regulates the ATPase activity of the NS3 helicase activity. NS4A allows NS3 helicase to conserve energy during unwinding. In terms of biological role, functions as a signal peptide for NS4B and is required for the interferon antagonism activity of the latter. Functionally, induces the formation of ER-derived membrane vesicles where the viral replication takes place. Inhibits interferon (IFN)-induced host STAT1 phosphorylation and nuclear translocation, thereby preventing the establishment of cellular antiviral state by blocking the IFN-alpha/beta pathway. Replicates the viral (+) and (-) RNA genome, and performs the capping of genomes in the cytoplasm. NS5 methylates viral RNA cap at guanine N-7 and ribose 2'-O positions. Besides its role in RNA genome replication, also prevents the establishment of cellular antiviral state by blocking the interferon-alpha/beta (IFN-alpha/beta) signaling pathway. IFN-I induces binding of NS5 to host IFN-activated transcription factor STAT2, preventing its transcriptional activity. Host TRIM23 is the E3 ligase that interacts with and polyubiquitinates NS5 to promote its binding to STAT2 and trigger IFN-I signaling inhibition. In Yellow fever virus (isolate Ethiopia/Couma/1961) (YFV), this protein is Genome polyprotein.